Reading from the N-terminus, the 266-residue chain is Blue copper protein (266 aa).

Positions 1–24 (MAYSKILFCFMIGFVGFLPAITMA) are cleaved as a signal peptide. Phytocyanin domains follow at residues 25–56 (TQYLVGDDRGWTLDFDYQTWAKNKTFKVGDTL), 57–102 (APPP…TVED), and 116–216 (TEYW…TVEG). An N-linked (GlcNAc...) asparagine glycan is attached at Asn47. His156 lines the Cu cation pocket. N-linked (GlcNAc...) asparagine glycosylation is present at Asn162. Cys169 and Cys203 are oxidised to a cystine. Cu cation contacts are provided by Cys197, His202, and Gln208. A helical membrane pass occupies residues 245-265 (ITSPYKMFVGGAVSIWTILTL).

It is found in the membrane. This is Blue copper protein from Petunia hybrida (Petunia).